Reading from the N-terminus, the 150-residue chain is Ribosome maturation factor RimP (150 aa).

This sequence belongs to the RimP family.

The protein resides in the cytoplasm. Its function is as follows. Required for maturation of 30S ribosomal subunits. This chain is Ribosome maturation factor RimP, found in Yersinia pestis bv. Antiqua (strain Antiqua).